A 1146-amino-acid chain; its full sequence is Sodium/hydrogen exchanger 7 (1146 aa).

Over methionine 1–lysine 28 the chain is Extracellular. A helical transmembrane segment spans residues leucine 29–alanine 49. Over serine 50 to arginine 58 the chain is Cytoplasmic. Residues valine 59 to alanine 79 form a helical membrane-spanning segment. Residues lysine 80–glutamate 99 are Extracellular-facing. A helical membrane pass occupies residues leucine 100–histidine 120. Over glutamine 121–glycine 127 the chain is Cytoplasmic. Residues glutamine 128–valine 148 traverse the membrane as a helical segment. The Extracellular segment spans residues lysine 149–lysine 159. Residues threonine 160–leucine 180 traverse the membrane as a helical segment. Topologically, residues lysine 181–threonine 191 are cytoplasmic. Residues isoleucine 192–leucine 212 traverse the membrane as a helical segment. Over lysine 213–lysine 227 the chain is Extracellular. The chain crosses the membrane as a helical span at residues phenylalanine 228 to tryptophan 250. Over leucine 251–phenylalanine 253 the chain is Cytoplasmic. A helical transmembrane segment spans residues isoleucine 254–tyrosine 273. The Extracellular segment spans residues tyrosine 274–glutamate 278. Residues tryptophan 279–alanine 299 traverse the membrane as a helical segment. Residues arginine 300–histidine 313 are Cytoplasmic-facing. The chain crosses the membrane as a helical span at residues phenylalanine 314 to isoleucine 334. Over alanine 335–arginine 352 the chain is Extracellular. The helical transmembrane segment at phenylalanine 353–tyrosine 373 threads the bilayer. Residues proline 374–glutamate 387 lie on the Cytoplasmic side of the membrane. A helical membrane pass occupies residues serine 388 to valine 408. At lysine 409–glutamate 420 the chain is on the extracellular side. Residues threonine 421–glycine 441 form a helical membrane-spanning segment. Residues serine 442–leucine 1146 lie on the Cytoplasmic side of the membrane. 2 disordered regions span residues leucine 981–arginine 1001 and cysteine 1102–glutamate 1128. Residues serine 986 to serine 996 show a composition bias toward low complexity. Over residues glutamate 1109 to valine 1118 the composition is skewed to polar residues.

The protein belongs to the monovalent cation:proton antiporter 1 (CPA1) transporter (TC 2.A.36) family. As to quaternary structure, interacts with CIPK24/SOS2 and CBL4/SOS3. Phosphorylated by CIPK24/SOS2 in complex with CBL4/SOS3. More expressed in roots than in shoots. Mostly localized in parenchyma cells at the xylem/symplast boundary in roots, hypocotyls, stems and leaves. Also present in root tips epidermal cells.

It localises to the cell membrane. The catalysed reaction is Na(+)(in) + H(+)(out) = Na(+)(out) + H(+)(in). It carries out the reaction K(+)(in) + H(+)(out) = K(+)(out) + H(+)(in). Acts in electroneutral exchange of protons for cations such as Na(+) or Li(+) across plasma membrane. Involved in Na(+) and K(+) homeostasis. Required for cytoplasmic Na(+) and Li(+) detoxification by secreting them from the cytoplasm to the extracellular space. Regulates Na(+) content of the xylem sap. This Arabidopsis thaliana (Mouse-ear cress) protein is Sodium/hydrogen exchanger 7 (NHX7).